A 506-amino-acid chain; its full sequence is ATP-dependent rRNA helicase RRP3 (506 aa).

Disordered regions lie at residues 1–22 and 37–88; these read MSGK…KSKE and NQKK…FESF. Positions 49–69 are enriched in acidic residues; it reads SDQEDDPSESEEEEGSDSEDV. The Q motif motif lies at 86 to 114; the sequence is ESFSDLDLVPELIEACKNLNFAKPTPIQA. The 173-residue stretch at 117-289 folds into the Helicase ATP-binding domain; that stretch reads IPPALQGHDI…RASLTNPVKC (173 aa). Residue 130–137 participates in ATP binding; sequence AQTGSGKT. A DEAD box motif is present at residues 236–239; the sequence is DEAD. The 149-residue stretch at 312 to 460 folds into the Helicase C-terminal domain; that stretch reads LKNTYLIYLM…KENVNKDAIL (149 aa). A disordered region spans residues 485 to 506; it reads IARGKGRRGRMAARDDMDKGER. The segment covering 496–506 has biased composition (basic and acidic residues); that stretch reads AARDDMDKGER.

The protein belongs to the DEAD box helicase family. DDX47/RRP3 subfamily. As to quaternary structure, interacts with the SSU processome.

It is found in the nucleus. It catalyses the reaction ATP + H2O = ADP + phosphate + H(+). Functionally, ATP-dependent rRNA helicase required for pre-ribosomal RNA processing. Involved in the maturation of the 35S-pre-rRNA and to its cleavage to mature 18S rRNA. In Vanderwaltozyma polyspora (strain ATCC 22028 / DSM 70294 / BCRC 21397 / CBS 2163 / NBRC 10782 / NRRL Y-8283 / UCD 57-17) (Kluyveromyces polysporus), this protein is ATP-dependent rRNA helicase RRP3.